The following is a 493-amino-acid chain: Calcium-binding tyrosine phosphorylation-regulated protein (493 aa).

The 38-residue stretch at 12–49 (YGLKTLLEGISRAVLKTNPSNINQFAAAYFQELTMYRG) folds into the RIIa domain. 4 disordered regions span residues 85 to 164 (EPGK…VSPE), 244 to 271 (DLGS…QEPP), 330 to 354 (NEQS…TTSG), and 426 to 493 (IVSD…STAE). The span at 90-100 (SVESKVPTQME) shows a compositional bias: polar residues. The span at 101-117 (KSTDTDEDNVTRTEYSD) shows a compositional bias: basic and acidic residues. Residues 141–152 (SSKPATPKTTTP) show a composition bias toward low complexity. T151 is modified (phosphothreonine). A Phosphoserine modification is found at S155. Composition is skewed to polar residues over residues 426–442 (IVSD…NSVP) and 461–470 (SGTSVKSSSG). The segment covering 484–493 (IEPEGESTAE) has biased composition (acidic residues).

In terms of assembly, interacts with FSCB. Isoform 3 self-associates. Isoform 3 and isoform 5 interact with GSK3B. Isoform 1 does not interact with GSK3B. Post-translationally, isoform 1 is phosphorylated on tyrosine residues during in vitro capacitation. Isoform 3 and isoform 5 are phosphorylated by GSK3B in vitro. Dephosphorylation affects its ability to bind calcium. In terms of tissue distribution, expressed in elongating spermatids and spermatozoa (at protein level). Isoform 1 is expressed in testis. Isoform 3 and isoform 5 are also expressed in brain, pancreas and numerous brain tumors.

It localises to the cytoplasm. The protein resides in the cytoskeleton. It is found in the cell projection. Its subcellular location is the cilium. The protein localises to the flagellum. It localises to the nucleus. May function as a regulator of both motility- and head-associated functions such as capacitation and the acrosome reaction. Isoform 1 binds calcium in vitro. Isoform 2 and isoform 6 probably bind calcium. Isoform 3 and isoform 5 do not bind calcium in vitro. Isoform 4 probably does not bind calcium. This chain is Calcium-binding tyrosine phosphorylation-regulated protein (CABYR), found in Homo sapiens (Human).